The sequence spans 217 residues: Oxygen regulatory protein NreC (217 aa).

The Response regulatory domain occupies 2-119 (KIVIADDHAV…QLLLAIRTVY (118 aa)). D53 carries the 4-aspartylphosphate modification. In terms of domain architecture, HTH luxR-type spans 148 to 213 (TTDPFKILSK…ELVEYALKKK (66 aa)). Positions 172–191 (NKEIAEKLFVSVKTVEAHKT) form a DNA-binding region, H-T-H motif.

Phosphorylated by NreB.

The protein resides in the cytoplasm. Its function is as follows. Member of the two-component regulatory system NreB/NreC involved in the control of dissimilatory nitrate/nitrite reduction in response to oxygen. Phosphorylated NreC binds to a GC-rich palindromic sequence at the promoters of the nitrate (narGHJI) and nitrite (nir) reductase operons, as well as the putative nitrate transporter gene narT, and activates their expression. The chain is Oxygen regulatory protein NreC (nreC) from Staphylococcus aureus (strain USA300 / TCH1516).